The chain runs to 292 residues: Protein SETSIP (292 aa).

The segment covering 1-11 has biased composition (low complexity); it reads MAPKRQSPLPL. 2 disordered regions span residues 1–43 and 158–292; these read MAPK…EQQE and LNES…GEDD. A coiled-coil region spans residues 35 to 78; that stretch reads KKGEKEQQEAIEHIDEVQNEIDRLNEQDSEEILKVEQKYNKLRQ. Residues 237-292 are compositionally biased toward acidic residues; the sequence is DMDDEEGGEDDDDDDDDGDEGEEELEDIDEGDEDEGEEDEDDDEGEEGEEDEGEDD.

Belongs to the nucleosome assembly protein (NAP) family. As to expression, expressed in endothelial cell (EC) and protein-induced pluripotent stem (PiPS) endothelial cell (EC) (at protein level).

It localises to the cytoplasm. The protein localises to the nucleus. Plays a role as a transcriptional activator involved in the early stage of somatic cell reprogramming. Promotes the differentiation of protein-induced pluripotent stem (PiPS) cells into endothelial cells and the formation of vascular-like tubes (in vitro). Involved in the transcription induction of vascular endothelial-cadherin (VE-cadherin) expression. Associates to the VE-cadherin gene promoter. The protein is Protein SETSIP (SETSIP) of Homo sapiens (Human).